A 1224-amino-acid chain; its full sequence is A disintegrin and metalloproteinase with thrombospondin motifs 16 (1224 aa).

Residues 1–24 (MKPRARGWRGLAALWMLLAQVAEQ) form the signal peptide. A propeptide spanning residues 25–279 (APACAMGPAA…EYKSCLRHKR (255 aa)) is cleaved from the precursor. The interval 31 to 53 (GPAAAAPGSPSVPRPPPPAERPG) is disordered. Residues 40–50 (PSVPRPPPPAE) are compositionally biased toward pro residues. Asn-156 carries an N-linked (GlcNAc...) asparagine glycan. Residues 247 to 254 (HFCGRRKK) carry the Cysteine switch motif. Residue Cys-249 coordinates Zn(2+). In terms of domain architecture, Peptidase M12B spans 290 to 495 (LNVETLVVVD…AQAICLADQP (206 aa)). Residue Asn-310 is glycosylated (N-linked (GlcNAc...) asparagine). Disulfide bonds link Cys-366/Cys-417, Cys-392/Cys-399, Cys-411/Cys-490, Cys-450/Cys-474, Cys-518/Cys-543, Cys-529/Cys-550, Cys-538/Cys-569, Cys-563/Cys-574, Cys-598/Cys-635, Cys-602/Cys-640, and Cys-613/Cys-625. A Zn(2+)-binding site is contributed by His-433. Residue Glu-434 is part of the active site. His-437 and His-443 together coordinate Zn(2+). The 90-residue stretch at 496-585 (KPVKEYKYPE…KYGDEGPKPT (90 aa)) folds into the Disintegrin domain. One can recognise a TSP type-1 1 domain in the interval 586 to 641 (HGHWSDWSSWSPCSRTCGGGVSHRSRLCTNPKPSHGGKFCEGSTRTLKLCNSQKCP). N-linked (GlcNAc...) asparagine glycosylation is found at Asn-741, Asn-780, Asn-835, Asn-905, and Asn-935. Residues 747-873 (IHRGLYTKHH…KQPPAQPSYT (127 aa)) form a spacer region. 5 TSP type-1 domains span residues 874-922 (WAIV…LVPC), 927-987 (CPPS…QSCP), 988-1048 (PAWS…QRCH), 1051-1115 (KKLQ…LPCP), and 1127-1181 (RGSW…HFCP). 3 disulfides stabilise this stretch: Cys-939/Cys-981, Cys-943/Cys-986, and Cys-954/Cys-970. Residues 1186–1223 (KDAFCKDYFHWCYLVPQHGMCSHKFYGKQCCKTCSKSN) form the PLAC domain.

Requires Zn(2+) as cofactor. In terms of processing, the precursor is cleaved by a furin endopeptidase. Glycosylated. Can be O-fucosylated by POFUT2 on a serine or a threonine residue found within the consensus sequence C1-X(2)-(S/T)-C2-G of the TSP type-1 repeat domains where C1 and C2 are the first and second cysteine residue of the repeat, respectively. Fucosylated repeats can then be further glycosylated by the addition of a beta-1,3-glucose residue by the glucosyltransferase, B3GALTL. Fucosylation mediates the efficient secretion of ADAMTS family members. Can also be C-glycosylated with one or two mannose molecules on tryptophan residues within the consensus sequence W-X-X-W of the TPRs, and N-glycosylated. These other glycosylations can also facilitate secretion. In terms of tissue distribution, expressed in fetal lung and kidney and in adult prostate and ovary.

Its subcellular location is the secreted. The protein resides in the extracellular space. It is found in the extracellular matrix. In Homo sapiens (Human), this protein is A disintegrin and metalloproteinase with thrombospondin motifs 16 (ADAMTS16).